The chain runs to 378 residues: Succinyl-diaminopimelate desuccinylase (378 aa).

Position 66 (His66) interacts with Zn(2+). Residue Asp68 is part of the active site. Asp100 is a Zn(2+) binding site. The Proton acceptor role is filled by Glu134. Residues Glu135, Glu163, and His350 each coordinate Zn(2+).

It belongs to the peptidase M20A family. DapE subfamily. Homodimer. It depends on Zn(2+) as a cofactor. Requires Co(2+) as cofactor.

The enzyme catalyses N-succinyl-(2S,6S)-2,6-diaminopimelate + H2O = (2S,6S)-2,6-diaminopimelate + succinate. The protein operates within amino-acid biosynthesis; L-lysine biosynthesis via DAP pathway; LL-2,6-diaminopimelate from (S)-tetrahydrodipicolinate (succinylase route): step 3/3. Its function is as follows. Catalyzes the hydrolysis of N-succinyl-L,L-diaminopimelic acid (SDAP), forming succinate and LL-2,6-diaminopimelate (DAP), an intermediate involved in the bacterial biosynthesis of lysine and meso-diaminopimelic acid, an essential component of bacterial cell walls. In Hydrogenovibrio crunogenus (strain DSM 25203 / XCL-2) (Thiomicrospira crunogena), this protein is Succinyl-diaminopimelate desuccinylase.